The chain runs to 440 residues: Light-independent protochlorophyllide reductase subunit N (440 aa).

Positions 15, 40, and 99 each coordinate [4Fe-4S] cluster.

Belongs to the BchN/ChlN family. In terms of assembly, protochlorophyllide reductase is composed of three subunits; BchL, BchN and BchB. Forms a heterotetramer of two BchB and two BchN subunits. [4Fe-4S] cluster serves as cofactor.

The catalysed reaction is chlorophyllide a + oxidized 2[4Fe-4S]-[ferredoxin] + 2 ADP + 2 phosphate = protochlorophyllide a + reduced 2[4Fe-4S]-[ferredoxin] + 2 ATP + 2 H2O. It functions in the pathway porphyrin-containing compound metabolism; bacteriochlorophyll biosynthesis (light-independent). In terms of biological role, component of the dark-operative protochlorophyllide reductase (DPOR) that uses Mg-ATP and reduced ferredoxin to reduce ring D of protochlorophyllide (Pchlide) to form chlorophyllide a (Chlide). This reaction is light-independent. The NB-protein (BchN-BchB) is the catalytic component of the complex. The chain is Light-independent protochlorophyllide reductase subunit N from Heliobacterium mobile (Heliobacillus mobilis).